Here is an 81-residue protein sequence, read N- to C-terminus: Bacteriochlorophyll c-binding protein (81 aa).

A bacteriochlorophyll c is bound at residue His-25.

The protein belongs to the BChl C/E-binding protein family.

The protein resides in the chlorosome. It is found in the chlorosome envelope. In terms of biological role, component of the photosynthetic apparatus. The light harvesting B740 complex binds bacteriochlorophyll c. This Prosthecochloris aestuarii (strain DSM 271 / SK 413) protein is Bacteriochlorophyll c-binding protein (csmA).